Reading from the N-terminus, the 59-residue chain is Large ribosomal subunit protein uL30 (59 aa).

It belongs to the universal ribosomal protein uL30 family. As to quaternary structure, part of the 50S ribosomal subunit.

The protein is Large ribosomal subunit protein uL30 of Rhodococcus jostii (strain RHA1).